Reading from the N-terminus, the 207-residue chain is Large ribosomal subunit protein uL4 (207 aa).

Positions 49-77 are disordered; sequence HAVKNRSAVRGGGKKPWRQKGTGRARQGS. A compositionally biased stretch (basic residues) spans 60–71; that stretch reads GGKKPWRQKGTG.

This sequence belongs to the universal ribosomal protein uL4 family. Part of the 50S ribosomal subunit.

Its function is as follows. One of the primary rRNA binding proteins, this protein initially binds near the 5'-end of the 23S rRNA. It is important during the early stages of 50S assembly. It makes multiple contacts with different domains of the 23S rRNA in the assembled 50S subunit and ribosome. In terms of biological role, forms part of the polypeptide exit tunnel. This is Large ribosomal subunit protein uL4 from Levilactobacillus brevis (strain ATCC 367 / BCRC 12310 / CIP 105137 / JCM 1170 / LMG 11437 / NCIMB 947 / NCTC 947) (Lactobacillus brevis).